A 255-amino-acid polypeptide reads, in one-letter code: Glutamate racemase (255 aa).

Residues 7-8 (DS) and 39-40 (YG) each bind substrate. The active-site Proton donor/acceptor is Cys70. 71–72 (NT) serves as a coordination point for substrate. Cys181 acts as the Proton donor/acceptor in catalysis. 182–183 (TH) lines the substrate pocket.

It belongs to the aspartate/glutamate racemases family.

It carries out the reaction L-glutamate = D-glutamate. It participates in cell wall biogenesis; peptidoglycan biosynthesis. Provides the (R)-glutamate required for cell wall biosynthesis. The polypeptide is Glutamate racemase (Helicobacter pylori (strain ATCC 700392 / 26695) (Campylobacter pylori)).